We begin with the raw amino-acid sequence, 514 residues long: Peptide chain release factor 3 (514 aa).

The tr-type G domain maps to 8–268 (KKRRTFAIIS…TFLKFAPEPH (261 aa)). GTP contacts are provided by residues 17–24 (SHPDAGKT), 85–89 (DTPGH), and 139–142 (NKLD).

It belongs to the TRAFAC class translation factor GTPase superfamily. Classic translation factor GTPase family. PrfC subfamily.

The protein localises to the cytoplasm. Increases the formation of ribosomal termination complexes and stimulates activities of RF-1 and RF-2. It binds guanine nucleotides and has strong preference for UGA stop codons. It may interact directly with the ribosome. The stimulation of RF-1 and RF-2 is significantly reduced by GTP and GDP, but not by GMP. The sequence is that of Peptide chain release factor 3 from Streptococcus gordonii (strain Challis / ATCC 35105 / BCRC 15272 / CH1 / DL1 / V288).